Here is a 703-residue protein sequence, read N- to C-terminus: Polyribonucleotide nucleotidyltransferase (703 aa).

Residues Asp-487 and Asp-493 each contribute to the Mg(2+) site. The region spanning 554-613 (PKMETIKIDPDKIRDVIGKGGATIRSICEDTGASIDIDDNGTVRIYAESKLAADEAIYRI) is the KH domain. Positions 623 to 691 (GKLYRGKVER…ARGRIKLSMK (69 aa)) constitute an S1 motif domain.

The protein belongs to the polyribonucleotide nucleotidyltransferase family. Component of the RNA degradosome, which is a multiprotein complex involved in RNA processing and mRNA degradation. Mg(2+) is required as a cofactor.

The protein resides in the cytoplasm. The enzyme catalyses RNA(n+1) + phosphate = RNA(n) + a ribonucleoside 5'-diphosphate. In terms of biological role, involved in mRNA degradation. Catalyzes the phosphorolysis of single-stranded polyribonucleotides processively in the 3'- to 5'-direction. The chain is Polyribonucleotide nucleotidyltransferase from Hahella chejuensis (strain KCTC 2396).